A 320-amino-acid chain; its full sequence is Transcription factor bHLH34 (320 aa).

One can recognise a bHLH domain in the interval 162–213 (SKPGTKACREKLRREKLNDKFMDLSSVLEPGRTPKTDKSAILDDAIRVVNQL). The segment at 299–320 (WSPLPPADRDTSRDLKNLPPVA) is disordered. Over residues 305 to 314 (ADRDTSRDLK) the composition is skewed to basic and acidic residues.

As to quaternary structure, homodimer. Expressed constitutively in roots, leaves, stems, and flowers.

The protein resides in the nucleus. The chain is Transcription factor bHLH34 (BHLH34) from Arabidopsis thaliana (Mouse-ear cress).